The primary structure comprises 500 residues: Na(+)/H(+) antiporter NhaB (500 aa).

The next 12 membrane-spanning stretches (helical) occupy residues Pro34–Phe54, Cys62–Thr82, Leu90–Met110, Ala129–Leu149, Thr150–Ala170, Leu205–Pro225, Phe241–Val261, Ile311–Ile331, Phe350–Ile370, Met394–Ile414, Val449–Leu469, and Met477–Ser497.

Belongs to the NhaB Na(+)/H(+) (TC 2.A.34) antiporter family.

The protein resides in the cell inner membrane. It catalyses the reaction 2 Na(+)(in) + 3 H(+)(out) = 2 Na(+)(out) + 3 H(+)(in). Functionally, na(+)/H(+) antiporter that extrudes sodium in exchange for external protons. The sequence is that of Na(+)/H(+) antiporter NhaB from Pseudomonas fluorescens (strain ATCC BAA-477 / NRRL B-23932 / Pf-5).